We begin with the raw amino-acid sequence, 267 residues long: Undecaprenyl-diphosphatase (267 aa).

A run of 7 helical transmembrane segments spans residues 1–21, 40–60, 85–105, 111–131, 190–210, 219–239, and 245–265; these read MSLF…FLPV, GQVI…LYFW, LAMG…ALHF, ALRS…LLWW, MLMS…DVAV, DGAI…SLMM, and VSFT…LGIA.

Belongs to the UppP family.

The protein localises to the cell inner membrane. The enzyme catalyses di-trans,octa-cis-undecaprenyl diphosphate + H2O = di-trans,octa-cis-undecaprenyl phosphate + phosphate + H(+). Its function is as follows. Catalyzes the dephosphorylation of undecaprenyl diphosphate (UPP). Confers resistance to bacitracin. The sequence is that of Undecaprenyl-diphosphatase from Ruegeria pomeroyi (strain ATCC 700808 / DSM 15171 / DSS-3) (Silicibacter pomeroyi).